We begin with the raw amino-acid sequence, 554 residues long: Hyaluronan synthase 3 (554 aa).

The Cytoplasmic portion of the chain corresponds to 1–15 (MPVQLTTALRVVGTS). A helical membrane pass occupies residues 16–36 (LFALVVLGGILAAYVTGYQFI). The Extracellular segment spans residues 37 to 44 (HTEKHYLS). Residues 45–65 (FGLYGAILGLHLLIQSLFAFL) traverse the membrane as a helical segment. Residues 66–378 (EHRRMRRAGR…NSLWFHKHHL (313 aa)) lie on the Cytoplasmic side of the membrane. A helical transmembrane segment spans residues 379–399 (WMTYESVVTGFFPFFLIATVI). Residues 400-409 (QLFYRGRIWN) are Extracellular-facing. Residues 410-430 (ILLFLLTVQLVGIIKATYACF) traverse the membrane as a helical segment. Topologically, residues 431–441 (LRGNAEMIFMS) are cytoplasmic. The chain crosses the membrane as a helical span at residues 442–462 (LYSLLYMSSLLPAKIFAIATI). N463 is a glycosylation site (N-linked (GlcNAc...) asparagine). The Extracellular portion of the chain corresponds to 463 to 474 (NKSGWGTSGRKT). Residues 475–495 (IVVNFIGLIPVSIWVAVLLGG) form a helical membrane-spanning segment. Over 496–516 (LAYTAYCQDLFSETELAFLVS) the chain is Cytoplasmic. The chain crosses the membrane as a helical span at residues 517 to 537 (GAILYGCYWVALLMLYLAIIA). The Extracellular portion of the chain corresponds to 538–554 (RRCGKKPEQYSLAFAEV).

Belongs to the NodC/HAS family. Mg(2+) is required as a cofactor. In terms of processing, O-GlcNAcylation increases the hyaluronan synthase activity, HAS3 stability and its plasma membrane residence. The concentration of UDP-GlcNAc controls the level of O-GlcNAc modification.

Its subcellular location is the cell membrane. It localises to the golgi apparatus membrane. The protein localises to the golgi apparatus. It is found in the trans-Golgi network membrane. The protein resides in the cytoplasmic vesicle. The catalysed reaction is [hyaluronan](n) + UDP-N-acetyl-alpha-D-glucosamine = N-acetyl-beta-D-glucosaminyl-(1-&gt;4)-[hyaluronan](n) + UDP + H(+). It catalyses the reaction N-acetyl-beta-D-glucosaminyl-(1-&gt;4)-[hyaluronan](n) + UDP-alpha-D-glucuronate = [hyaluronan](n+1) + UDP + H(+). It participates in glycan biosynthesis; hyaluronan biosynthesis. Its function is as follows. Catalyzes the addition of GlcNAc or GlcUA monosaccharides to the nascent hyaluronan polymer. Therefore, it is essential to hyaluronan synthesis a major component of most extracellular matrices that has a structural role in tissues architectures and regulates cell adhesion, migration and differentiation. This is one of three isoenzymes responsible for cellular hyaluronan synthesis. The protein is Hyaluronan synthase 3 (Has3) of Mus musculus (Mouse).